The following is a 216-amino-acid chain: Sperm microtubule inner protein 8 (216 aa).

As to quaternary structure, microtubule inner protein component of sperm flagellar doublet microtubules.

It is found in the cytoplasm. The protein resides in the cytoskeleton. It localises to the flagellum axoneme. Its function is as follows. Microtubule inner protein (MIP) part of the dynein-decorated doublet microtubules (DMTs) in flagellum axoneme. May serve to reinforce and thus stabilize the microtubule structure in the sperm flagella. This Rattus norvegicus (Rat) protein is Sperm microtubule inner protein 8 (Spmip8).